Consider the following 370-residue polypeptide: GTPase Obg (370 aa).

One can recognise an Obg domain in the interval 1-159 (MKFIDEARIE…RMLKLELKVL (159 aa)). The tract at residues 128–147 (LHFKSSTNRAPRQKTDGKPG) is disordered. An OBG-type G domain is found at 160 to 334 (ADVGLLGMPN…LCYAIYDYLS (175 aa)). GTP-binding positions include 166–173 (GMPNAGKS), 191–195 (FTTLA), 213–216 (DIPG), 284–287 (NKLD), and 315–317 (SAL). Positions 173 and 193 each coordinate Mg(2+).

The protein belongs to the TRAFAC class OBG-HflX-like GTPase superfamily. OBG GTPase family. As to quaternary structure, monomer. Requires Mg(2+) as cofactor.

Its subcellular location is the cytoplasm. Its function is as follows. An essential GTPase which binds GTP, GDP and possibly (p)ppGpp with moderate affinity, with high nucleotide exchange rates and a fairly low GTP hydrolysis rate. Plays a role in control of the cell cycle, stress response, ribosome biogenesis and in those bacteria that undergo differentiation, in morphogenesis control. In Burkholderia orbicola (strain MC0-3), this protein is GTPase Obg.